Reading from the N-terminus, the 513-residue chain is Histidine ammonia-lyase (513 aa).

A cross-link (5-imidazolinone (Ala-Gly)) is located at residues 145 to 147 (ASG). Ser-146 carries the post-translational modification 2,3-didehydroalanine (Ser).

Belongs to the PAL/histidase family. Post-translationally, contains an active site 4-methylidene-imidazol-5-one (MIO), which is formed autocatalytically by cyclization and dehydration of residues Ala-Ser-Gly.

The protein localises to the cytoplasm. It carries out the reaction L-histidine = trans-urocanate + NH4(+). The protein operates within amino-acid degradation; L-histidine degradation into L-glutamate; N-formimidoyl-L-glutamate from L-histidine: step 1/3. In Vibrio vulnificus (strain CMCP6), this protein is Histidine ammonia-lyase.